Reading from the N-terminus, the 89-residue chain is Small ribosomal subunit protein uS15 (89 aa).

This sequence belongs to the universal ribosomal protein uS15 family. Part of the 30S ribosomal subunit. Forms a bridge to the 50S subunit in the 70S ribosome, contacting the 23S rRNA.

One of the primary rRNA binding proteins, it binds directly to 16S rRNA where it helps nucleate assembly of the platform of the 30S subunit by binding and bridging several RNA helices of the 16S rRNA. Its function is as follows. Forms an intersubunit bridge (bridge B4) with the 23S rRNA of the 50S subunit in the ribosome. The sequence is that of Small ribosomal subunit protein uS15 from Crocosphaera subtropica (strain ATCC 51142 / BH68) (Cyanothece sp. (strain ATCC 51142)).